The following is a 586-amino-acid chain: Actin-related protein 9 (586 aa).

Positions 141–169 (STPIVDKDADVDPLQRSTPDDTEPNSEEN) are disordered.

This sequence belongs to the actin family. ARP8 subfamily.

The polypeptide is Actin-related protein 9 (ARP9) (Oryza sativa subsp. indica (Rice)).